The primary structure comprises 418 residues: Putative ion-transport protein YfeO (418 aa).

A run of 12 helical transmembrane segments spans residues 10 to 30 (LLLS…LIMV), 54 to 74 (DSPL…GLVI), 99 to 119 (ALPG…SLGP), 120 to 140 (EHPI…RLLP), 149 to 169 (ILAS…AALI), 186 to 206 (LFAP…FFHP), 223 to 243 (ILSG…AVWC), 258 to 278 (VFVL…GGPV), 300 to 320 (DYFL…ASGF), 322 to 342 (GGRI…LHEH), 343 to 363 (VPAV…VLVV), and 371 to 391 (LFMA…CIVM).

Belongs to the chloride channel (TC 2.A.49) family.

Its subcellular location is the cell membrane. The chain is Putative ion-transport protein YfeO from Escherichia coli O45:K1 (strain S88 / ExPEC).